The sequence spans 83 residues: U1-theraphotoxin-Hs1f (83 aa).

The first 21 residues, 1–21 (MKVTLIAILTCAAVLVLHTTA), serve as a signal peptide directing secretion. Residues 22-48 (AEELEESQLMEVGMPDTELAAVDEERL) constitute a propeptide that is removed on maturation. 3 cysteine pairs are disulfide-bonded: Cys-51-Cys-64, Cys-55-Cys-75, and Cys-69-Cys-80.

The protein belongs to the neurotoxin 12 (Hwtx-2) family. 02 (Hwtx-2) subfamily. Expressed by the venom gland.

The protein resides in the secreted. Its function is as follows. Lethal neurotoxin that blocks neuromuscular transmission. The protein is U1-theraphotoxin-Hs1f of Cyriopagopus schmidti (Chinese bird spider).